We begin with the raw amino-acid sequence, 358 residues long: MEDIVHKYKVSVIICFFNSAETLDAMIKDAVNQTLKDKEIILIDDGSYDGSLEIAEKYANKYSFIKIFSQKNMGLSASRDKGLSEAQGEYVIYWDGDDSVESTMLEVLYNRAKADNSDIVCSQFYIYFLAINVKRKSLLPFPNYPLTGKEAFKNLLFTVYATFGRKNFVVGTLWDKLIRRELILKNNIRQQNVVFEDIVFVMQIFLKASKVSFVNNYFYTNFQRMGSMSSSISVLHKSKLSLNTMETLLKREGIFNECQNLYKKFFLQFYYFISFKQIYIISWNISDKLVYRAYKEKLISVLDEIKGLSEFQDCYEYAKSFGFNEIQILPRIMLKIWNFSSRLYVNFSIFIYKFFIKN.

This sequence belongs to the glycosyltransferase 2 family.

It carries out the reaction cholesterol + UDP-alpha-D-galactose = cholesteryl 3-beta-D-galactoside + UDP + H(+). The protein operates within glycolipid biosynthesis. Galactosyltransferase involved in the synthesis of cholesterol glycolipids, which are formed by the use of host-derived cholesterol and have been shown to be immunogenic, and possibly contribute to Lyme disease pathogenesis. Catalyzes the formation of cholesteryl beta-D-galactopyranoside (CGal) from cholesterol and UDP-alpha-D-galactose. Cannot use GDP-mannose. This Borreliella burgdorferi (strain ATCC 35210 / DSM 4680 / CIP 102532 / B31) (Borrelia burgdorferi) protein is Cholesterol galactosyltransferase.